The sequence spans 102 residues: Small ribosomal subunit protein uS10 (102 aa).

Belongs to the universal ribosomal protein uS10 family. Part of the 30S ribosomal subunit.

Its function is as follows. Involved in the binding of tRNA to the ribosomes. The protein is Small ribosomal subunit protein uS10 of Bartonella tribocorum (strain CIP 105476 / IBS 506).